Here is a 262-residue protein sequence, read N- to C-terminus: 5'-nucleotidase SurE (262 aa).

Residues aspartate 9, aspartate 10, serine 40, and asparagine 95 each contribute to the a divalent metal cation site.

Belongs to the SurE nucleotidase family. A divalent metal cation is required as a cofactor.

It localises to the cytoplasm. It catalyses the reaction a ribonucleoside 5'-phosphate + H2O = a ribonucleoside + phosphate. Functionally, nucleotidase that shows phosphatase activity on nucleoside 5'-monophosphates. The protein is 5'-nucleotidase SurE of Aliarcobacter butzleri (strain RM4018) (Arcobacter butzleri).